The chain runs to 288 residues: Ninja-family protein 6 (288 aa).

Disordered stretches follow at residues 1–50 (MASR…KRPR) and 66–207 (LHAD…TRTG). Gly residues predominate over residues 12 to 23 (AGEGAGPPGDAG). Residues 76 to 86 (LPLLRTTSLPT) show a composition bias toward low complexity. Residues 91–103 (ERWRRREMQSRRR) show a composition bias toward basic and acidic residues. Over residues 131–173 (RRSNASQGSNSASTTEQGIGGSMFNQSADAKSPSTSDNRNQND) the composition is skewed to polar residues. A compositionally biased stretch (low complexity) spans 195 to 207 (RLRTLGSLTTRTG).

The protein belongs to the Ninja family.

The protein localises to the nucleus. The sequence is that of Ninja-family protein 6 from Zea mays (Maize).